The sequence spans 188 residues: 2-amino-4-hydroxy-6-hydroxymethyldihydropteridine pyrophosphokinase (188 aa).

Belongs to the HPPK family.

The enzyme catalyses 6-hydroxymethyl-7,8-dihydropterin + ATP = (7,8-dihydropterin-6-yl)methyl diphosphate + AMP + H(+). It functions in the pathway cofactor biosynthesis; tetrahydrofolate biosynthesis; 2-amino-4-hydroxy-6-hydroxymethyl-7,8-dihydropteridine diphosphate from 7,8-dihydroneopterin triphosphate: step 4/4. Functionally, catalyzes the transfer of pyrophosphate from adenosine triphosphate (ATP) to 6-hydroxymethyl-7,8-dihydropterin, an enzymatic step in folate biosynthesis pathway. The chain is 2-amino-4-hydroxy-6-hydroxymethyldihydropteridine pyrophosphokinase (folK) from Mycobacterium tuberculosis (strain ATCC 25618 / H37Rv).